The primary structure comprises 214 residues: 3,4-dihydroxy-2-butanone 4-phosphate synthase (214 aa).

D-ribulose 5-phosphate is bound by residues 37–38 (RE), Asp-42, 150–154 (RRGHT), and Glu-174. Glu-38 provides a ligand contact to Mg(2+). Mg(2+) is bound at residue His-153.

The protein belongs to the DHBP synthase family. As to quaternary structure, homodimer. It depends on Mg(2+) as a cofactor. Requires Mn(2+) as cofactor.

It carries out the reaction D-ribulose 5-phosphate = (2S)-2-hydroxy-3-oxobutyl phosphate + formate + H(+). Its pathway is cofactor biosynthesis; riboflavin biosynthesis; 2-hydroxy-3-oxobutyl phosphate from D-ribulose 5-phosphate: step 1/1. Catalyzes the conversion of D-ribulose 5-phosphate to formate and 3,4-dihydroxy-2-butanone 4-phosphate. This Nitratidesulfovibrio vulgaris (strain DP4) (Desulfovibrio vulgaris) protein is 3,4-dihydroxy-2-butanone 4-phosphate synthase.